We begin with the raw amino-acid sequence, 286 residues long: MASGKEIRTKIGSIKNTQKITSAMEMVAASKMRKAQDRMEVGKPYARRMREVVGHIAAGNLEYQHLYITEREVKRVGYIVVSTDRGLCGGLNVNLFKAVLRHSKEWADKGIETDFCMVGAKGTAFFKSVGANIVASLRDIGEQPSITSLIGSVKVMLDAFADGKIDRLYVCSNDFVNTMTQTPKVERLLPLKPEDGAIHKRSWDYLYEPDAKELLDGLMVRYIESQVFQAVVENGACEQAARMIAMKSATDNAGNLINELQLAYNKARQAAITQELSEIVGGAAAV.

Belongs to the ATPase gamma chain family. F-type ATPases have 2 components, CF(1) - the catalytic core - and CF(0) - the membrane proton channel. CF(1) has five subunits: alpha(3), beta(3), gamma(1), delta(1), epsilon(1). CF(0) has three main subunits: a, b and c.

It localises to the cell inner membrane. In terms of biological role, produces ATP from ADP in the presence of a proton gradient across the membrane. The gamma chain is believed to be important in regulating ATPase activity and the flow of protons through the CF(0) complex. This Teredinibacter turnerae (strain ATCC 39867 / T7901) protein is ATP synthase gamma chain.